Here is a 284-residue protein sequence, read N- to C-terminus: NADH-cytochrome b5 reductase 1 (284 aa).

A helical transmembrane segment spans residues 8–28 (PFIIFATVAAIISSAVAYYFF). Positions 41–144 (NDFQKFPLIE…RGPKGFFTYT (104 aa)) constitute an FAD-binding FR-type domain. FAD contacts are provided by residues 124 to 139 (ESKKIGETIDIRGPKG) and 150 to 182 (SFGMIAGGTGITPMYQILTAILRNPEDKTKVSL).

The protein belongs to the flavoprotein pyridine nucleotide cytochrome reductase family. Monomer. Component of the 2-(3-amino-3-carboxypropyl)histidine synthase complex composed of DPH1, DPH2, DPH3 and a NADH-dependent reductase, predominantly CBR1. Requires FAD as cofactor.

The protein localises to the mitochondrion outer membrane. The catalysed reaction is 2 Fe(III)-[cytochrome b5] + NADH = 2 Fe(II)-[cytochrome b5] + NAD(+) + H(+). It carries out the reaction 2 Fe(3+)-[Dph3] + NADH = 2 Fe(2+)-[Dph3] + NAD(+) + H(+). It functions in the pathway protein modification; peptidyl-diphthamide biosynthesis. Functionally, NADH-dependent reductase for DPH3 and cytochrome b5. Required for the first step of diphthamide biosynthesis, a post-translational modification of histidine which occurs in elongation factor 2. DPH1 and DPH2 transfer a 3-amino-3-carboxypropyl (ACP) group from S-adenosyl-L-methionine (SAM) to a histidine residue, the reaction is assisted by a reduction system comprising DPH3 and a NADH-dependent reductase, predominantly CBR1. By reducing DPH3, also involved in the formation of the tRNA wobble base modification mcm5s 2U (5-methoxycarbonylmethyl-2-thiouridine), mediated by the elongator complex. The cytochrome b5/NADH cytochrome b5 reductase electron transfer system supports the catalytic activity of several sterol biosynthetic enzymes. The protein is NADH-cytochrome b5 reductase 1 (CBR1) of Debaryomyces hansenii (strain ATCC 36239 / CBS 767 / BCRC 21394 / JCM 1990 / NBRC 0083 / IGC 2968) (Yeast).